Reading from the N-terminus, the 247-residue chain is Carbonic anhydrase (247 aa).

Positions 1 to 34 are cleaved as a signal peptide; sequence MMFNKQIFTILILSLSLALAGSGCISEGAEDNVA. 93 to 95 serves as a coordination point for substrate; sequence RSD. The Proton donor/acceptor role is filled by E96. 109–110 serves as a coordination point for substrate; it reads QD. H115 provides a ligand contact to Zn(2+). The active site involves E118. Residues H151 and H156 each coordinate Zn(2+). N236 lines the substrate pocket.

It belongs to the gamma-class carbonic anhydrase family. Homotrimer. It depends on Zn(2+) as a cofactor.

Its subcellular location is the secreted. The catalysed reaction is hydrogencarbonate + H(+) = CO2 + H2O. Its function is as follows. Reversible hydration of carbon dioxide. Important for growth on acetate. As a probably extracellular enzyme, it may support a H(+)/CH(3)COO(-) symport mechanism and/or conversion of CO(2) to HCO(3)(-), removing excess CO(2) produced by growth on acetate. This is Carbonic anhydrase from Methanosarcina thermophila (strain ATCC 43570 / DSM 1825 / OCM 12 / VKM B-1830 / TM-1).